The chain runs to 358 residues: Ganglioside-induced differentiation-associated protein 1 (358 aa).

A GST N-terminal domain is found at 24–105; that stretch reads VKLILYHWTH…YLEQTFLDEK (82 aa). Residues Lys50, Lys172, Lys173, Lys188, and Lys190 each participate in a glycyl lysine isopeptide (Lys-Gly) (interchain with G-Cter in ubiquitin) cross-link. Residues 153–309 enclose the GST C-terminal domain; sequence PAYATTRIRS…LISAVLPTAF (157 aa). Lys203 is modified (N6-acetyllysine; alternate). Residue Lys203 forms a Glycyl lysine isopeptide (Lys-Gly) (interchain with G-Cter in ubiquitin); alternate linkage. Glycyl lysine isopeptide (Lys-Gly) (interchain with G-Cter in ubiquitin) cross-links involve residues Lys206, Lys207, and Lys214. A run of 2 helical transmembrane segments spans residues 292–312 and 320–340; these read VLGH…FRVA and LGTT…FMLF. The tract at residues 320-358 is required for mitochondrial localization; the sequence is LGTTLVVGLLAGMGYFAFMLFRKRLGSMILALRPRPNYF.

This sequence belongs to the GST superfamily. In terms of assembly, homodimer. Post-translationally, ubiquitinated by PRKN during mitophagy, leading to its degradation and enhancement of mitophagy. Deubiquitinated by USP30.

It is found in the mitochondrion outer membrane. It localises to the cytoplasm. In terms of biological role, regulates the mitochondrial network by promoting mitochondrial fission. This chain is Ganglioside-induced differentiation-associated protein 1 (GDAP1), found in Bos taurus (Bovine).